The chain runs to 126 residues: Phosphoribosyl-AMP cyclohydrolase (126 aa).

Residue D76 coordinates Mg(2+). Residue C77 coordinates Zn(2+). 2 residues coordinate Mg(2+): D78 and D80. Residues C94 and C101 each contribute to the Zn(2+) site.

This sequence belongs to the PRA-CH family. In terms of assembly, homodimer. Mg(2+) is required as a cofactor. Zn(2+) serves as cofactor.

Its subcellular location is the cytoplasm. It catalyses the reaction 1-(5-phospho-beta-D-ribosyl)-5'-AMP + H2O = 1-(5-phospho-beta-D-ribosyl)-5-[(5-phospho-beta-D-ribosylamino)methylideneamino]imidazole-4-carboxamide. The protein operates within amino-acid biosynthesis; L-histidine biosynthesis; L-histidine from 5-phospho-alpha-D-ribose 1-diphosphate: step 3/9. Functionally, catalyzes the hydrolysis of the adenine ring of phosphoribosyl-AMP. The chain is Phosphoribosyl-AMP cyclohydrolase from Ruthia magnifica subsp. Calyptogena magnifica.